The chain runs to 115 residues: Superoxide reductase (115 aa).

Positions 14, 16, 41, 47, 102, and 105 each coordinate Fe cation.

Belongs to the desulfoferrodoxin family. Homotetramer. Fe cation is required as a cofactor.

The catalysed reaction is reduced [rubredoxin] + superoxide + 2 H(+) = oxidized [rubredoxin] + H2O2. Functionally, uses electrons from reduced NADP, by way of rubredoxin and an oxidoreductase, to catalyze the reduction of superoxide to hydrogen peroxide. This Thermococcus kodakarensis (strain ATCC BAA-918 / JCM 12380 / KOD1) (Pyrococcus kodakaraensis (strain KOD1)) protein is Superoxide reductase (sorA).